The sequence spans 458 residues: ATP synthase subunit beta (458 aa).

ATP is bound at residue 148–155 (GGAGVGKT).

Belongs to the ATPase alpha/beta chains family. As to quaternary structure, F-type ATPases have 2 components, CF(1) - the catalytic core - and CF(0) - the membrane proton channel. CF(1) has five subunits: alpha(3), beta(3), gamma(1), delta(1), epsilon(1). CF(0) has three main subunits: a(1), b(2) and c(9-12). The alpha and beta chains form an alternating ring which encloses part of the gamma chain. CF(1) is attached to CF(0) by a central stalk formed by the gamma and epsilon chains, while a peripheral stalk is formed by the delta and b chains.

The protein localises to the cell inner membrane. It catalyses the reaction ATP + H2O + 4 H(+)(in) = ADP + phosphate + 5 H(+)(out). Produces ATP from ADP in the presence of a proton gradient across the membrane. The catalytic sites are hosted primarily by the beta subunits. This Halorhodospira halophila (strain DSM 244 / SL1) (Ectothiorhodospira halophila (strain DSM 244 / SL1)) protein is ATP synthase subunit beta.